The sequence spans 505 residues: NADH-quinone oxidoreductase subunit N (505 aa).

The next 14 helical transmembrane spans lie at 20 to 40 (ALAP…GDLF), 59 to 79 (ALAL…GGVF), 83 to 103 (GLAA…ALMS), 115 to 135 (GEYY…VSAG), 137 to 157 (AIVL…LVAL), 172 to 192 (FLMG…LYGL), 220 to 240 (AVVA…TVPF), 251 to 271 (APTT…FAVL), 285 to 305 (LWSD…NIAA), 314 to 334 (MLAY…AACT), 342 to 362 (AAYL…IIYL), 394 to 414 (LAAV…TAGF), 431 to 451 (ITVV…LGVA), and 481 to 501 (AVCL…LFWI).

This sequence belongs to the complex I subunit 2 family. In terms of assembly, NDH-1 is composed of 14 different subunits. Subunits NuoA, H, J, K, L, M, N constitute the membrane sector of the complex.

Its subcellular location is the cell inner membrane. It catalyses the reaction a quinone + NADH + 5 H(+)(in) = a quinol + NAD(+) + 4 H(+)(out). In terms of biological role, NDH-1 shuttles electrons from NADH, via FMN and iron-sulfur (Fe-S) centers, to quinones in the respiratory chain. The immediate electron acceptor for the enzyme in this species is believed to be ubiquinone. Couples the redox reaction to proton translocation (for every two electrons transferred, four hydrogen ions are translocated across the cytoplasmic membrane), and thus conserves the redox energy in a proton gradient. The sequence is that of NADH-quinone oxidoreductase subunit N from Desulfovibrio desulfuricans (strain ATCC 27774 / DSM 6949 / MB).